The chain runs to 159 residues: NAD(P)H-quinone oxidoreductase subunit J, chloroplastic (159 aa).

The protein belongs to the complex I 30 kDa subunit family. In terms of assembly, NDH is composed of at least 16 different subunits, 5 of which are encoded in the nucleus. In terms of tissue distribution, leaves.

Its subcellular location is the plastid. It localises to the chloroplast thylakoid membrane. The enzyme catalyses a plastoquinone + NADH + (n+1) H(+)(in) = a plastoquinol + NAD(+) + n H(+)(out). The catalysed reaction is a plastoquinone + NADPH + (n+1) H(+)(in) = a plastoquinol + NADP(+) + n H(+)(out). Its function is as follows. NDH shuttles electrons from NAD(P)H:plastoquinone, via FMN and iron-sulfur (Fe-S) centers, to quinones in the photosynthetic chain and possibly in a chloroplast respiratory chain. The immediate electron acceptor for the enzyme in this species is believed to be plastoquinone. Couples the redox reaction to proton translocation, and thus conserves the redox energy in a proton gradient. This chain is NAD(P)H-quinone oxidoreductase subunit J, chloroplastic, found in Zea mays (Maize).